Consider the following 386-residue polypeptide: WD repeat-containing protein 89 (386 aa).

6 WD repeats span residues 21 to 65 (KEPT…VIRE), 68 to 106 (GYPG…GKPV), 111 to 155 (GYPS…QDLS), 167 to 207 (THSD…EDDA), 213 to 253 (NSVS…TDEP), and 318 to 357 (GHAA…KTFT).

The polypeptide is WD repeat-containing protein 89 (WDR89) (Bos taurus (Bovine)).